The sequence spans 29 residues: Cyclotide psyleio C (29 aa).

The cyclopeptide (Gly-Arg) cross-link spans 1–29; it reads GDLPVCGETCFGGTCNTPGCVCAWPVCTR. Intrachain disulfides connect Cys6/Cys20, Cys10/Cys22, and Cys15/Cys27.

In terms of processing, this is a cyclic peptide.

Its function is as follows. Probably participates in a plant defense mechanism. In Psychotria leiocarpa, this protein is Cyclotide psyleio C.